The sequence spans 471 residues: Anthocyanidin 3-O-glucosyltransferase (471 aa).

The Proton acceptor role is filled by H24. H24 is an an anthocyanidin binding site. D130 (charge relay) is an active-site residue. Position 152 (T152) interacts with UDP-alpha-D-glucose. H161 serves as a coordination point for an anthocyanidin. Positions 352, 354, 369, 372, 374, and 377 each coordinate UDP-alpha-D-glucose. G392 provides a ligand contact to an anthocyanidin. The UDP-alpha-D-glucose site is built by D393 and Q394.

Belongs to the UDP-glycosyltransferase family.

The catalysed reaction is an anthocyanidin + UDP-alpha-D-glucose + H(+) = an anthocyanidin 3-O-beta-D-glucoside + UDP. Its pathway is pigment biosynthesis; anthocyanin biosynthesis. In terms of biological role, in the presence of other necessary color factors, this glycosylation reaction allows the accumulation of anthocyanin pigments. The sequence is that of Anthocyanidin 3-O-glucosyltransferase (BZ1) from Zea mays (Maize).